A 44-amino-acid polypeptide reads, in one-letter code: Large ribosomal subunit protein bL34 (44 aa).

The interval 1–26 (MKMTFQPKKRQRAKVHGFRQRMKTAG) is disordered. The span at 7-22 (PKKRQRAKVHGFRQRM) shows a compositional bias: basic residues.

The protein belongs to the bacterial ribosomal protein bL34 family.

The polypeptide is Large ribosomal subunit protein bL34 (Agathobacter rectalis (strain ATCC 33656 / DSM 3377 / JCM 17463 / KCTC 5835 / VPI 0990) (Eubacterium rectale)).